The primary structure comprises 29 residues: Conotoxin SIVC (29 aa).

Ala1 is subject to N-acetylalanine; partial. A 4-hydroxyproline modification is found at Pro2. Residues Thr7 and Thr9 are each glycosylated (O-linked (HexNAc...) threonine). 4-hydroxyproline occurs at positions 18 and 22. Cys29 is modified (cysteine amide).

Belongs to the conotoxin A superfamily. Post-translationally, O-linked glycans consist of Hex4-HexNAc2 hexasaccharides. N-terminus is found to be free and N-acetylated, depending on the fraction studied. In terms of processing, contains 3 disulfide bonds. In terms of tissue distribution, expressed by the venom duct. Low expression in the distal venom duct sections.

The protein localises to the secreted. Its function is as follows. Probable neurotoxin with ion channel inhibitor activity. The sequence is that of Conotoxin SIVC from Conus striatus (Striated cone).